A 453-amino-acid chain; its full sequence is Endoglucanase A (453 aa).

The N-terminal stretch at methionine 1–serine 26 is a signal peptide. Residue aspartate 82 is the Nucleophile of the active site. Positions threonine 115 to proline 126 are linker ('hinge') (Pro-Thr box). Histidine 417 is an active-site residue.

It belongs to the glycosyl hydrolase 9 (cellulase E) family. In terms of assembly, monomer.

It localises to the periplasm. The enzyme catalyses Endohydrolysis of (1-&gt;4)-beta-D-glucosidic linkages in cellulose, lichenin and cereal beta-D-glucans.. In terms of biological role, high levels of endoglucanase activity detected on acid-swollen cellulose, ball-milled cellulose, and carboxymethyl cellulose; moderate levels detected on filter paper, phosphoric acid-swollen cellulose, lichenan, and xylan. This chain is Endoglucanase A (endA), found in Fibrobacter succinogenes (Bacteroides succinogenes).